Here is an 818-residue protein sequence, read N- to C-terminus: Phenylalanine--tRNA ligase beta subunit (818 aa).

The tRNA-binding domain maps to 39–148 (AAELQKFEVA…EDAVVGENFT (110 aa)). Positions 423–498 (PQKKPLDFSA…RIYGYDKIES (76 aa)) constitute a B5 domain. Residues D476, D482, E485, and E486 each contribute to the Mg(2+) site. Residues 724 to 817 (SDFQANFRDY…IEQKFQGTLR (94 aa)) form the FDX-ACB domain.

This sequence belongs to the phenylalanyl-tRNA synthetase beta subunit family. Type 1 subfamily. Tetramer of two alpha and two beta subunits. Mg(2+) is required as a cofactor.

Its subcellular location is the cytoplasm. The catalysed reaction is tRNA(Phe) + L-phenylalanine + ATP = L-phenylalanyl-tRNA(Phe) + AMP + diphosphate + H(+). This Rickettsia felis (strain ATCC VR-1525 / URRWXCal2) (Rickettsia azadi) protein is Phenylalanine--tRNA ligase beta subunit.